A 358-amino-acid chain; its full sequence is Chorismate synthase (358 aa).

An NADP(+)-binding site is contributed by Arg46. Residues 123 to 125 (RSS), 235 to 236 (NA), Gly275, 290 to 294 (KATPS), and Arg316 each bind FMN.

This sequence belongs to the chorismate synthase family. In terms of assembly, homotetramer. The cofactor is FMNH2.

The catalysed reaction is 5-O-(1-carboxyvinyl)-3-phosphoshikimate = chorismate + phosphate. It functions in the pathway metabolic intermediate biosynthesis; chorismate biosynthesis; chorismate from D-erythrose 4-phosphate and phosphoenolpyruvate: step 7/7. In terms of biological role, catalyzes the anti-1,4-elimination of the C-3 phosphate and the C-6 proR hydrogen from 5-enolpyruvylshikimate-3-phosphate (EPSP) to yield chorismate, which is the branch point compound that serves as the starting substrate for the three terminal pathways of aromatic amino acid biosynthesis. This reaction introduces a second double bond into the aromatic ring system. The polypeptide is Chorismate synthase (Aliarcobacter butzleri (strain RM4018) (Arcobacter butzleri)).